Consider the following 1336-residue polypeptide: Adhesion G protein-coupled receptor A2 (1336 aa).

The N-terminal stretch at 1-33 is a signal peptide; the sequence is MGAGGRRMPVPPARLLLLPLLPCLLLLAPGTRG. Residues 34–769 are Extracellular-facing; it reads APGCPVPIRG…AGGSGAGLHP (736 aa). Residues Asn-84 and Asn-101 are each glycosylated (N-linked (GlcNAc...) asparagine). 4 LRR repeats span residues 85–106, 109–130, 133–154, and 157–178; these read GTIT…SFLG, LLEK…AFLG, ELKR…TFQG, and RLLR…VFDE. N-linked (GlcNAc...) asparagine glycosylation is present at Asn-162. The LRRCT domain maps to 190 to 241; the sequence is EFLTCDCRLRWLLPWARNHSLQLSERTLCAYPSALHAHALSSLQESQLRCEG. The Ig-like domain occupies 247 to 344; it reads THYLIPSLRQ…GNTSKKVEIV (98 aa). A disulfide bridge connects residues Cys-268 and Cys-328. Asn-275 carries N-linked (GlcNAc...) asparagine glycosylation. The short motif at 362-364 is the RGD element; sequence RGD. A GAIN-B domain is found at 594 to 757; the sequence is FRCTTGRPNI…AVLMELNAFP (164 aa). N-linked (GlcNAc...) asparagine glycosylation is found at Asn-602, Asn-691, and Asn-735. The interval 711 to 757 is GPS; that stretch reads AAWWNQDGPGGWSSEGCRLRYSQPNVSSLYCQHLGNVAVLMELNAFP. The cysteines at positions 727 and 741 are disulfide-linked. The helical transmembrane segment at 770–790 threads the bilayer; it reads VVYPCTALLLLCLFSTIITYI. The Cytoplasmic segment spans residues 791–805; sequence LNHSSIHVSRKGWHM. The helical transmembrane segment at 806–826 threads the bilayer; the sequence is LLNLCFHMAMTSAVFVGGVTL. At 827–830 the chain is on the extracellular side; sequence TNYQ. A helical transmembrane segment spans residues 831–851; that stretch reads MVCQAVGITLHYSSLSSLLWM. Residues 852–884 lie on the Cytoplasmic side of the membrane; that stretch reads GVKARVLHKELSWRAPPLEEGEAAPPGPRPMLR. Residues 885-905 traverse the membrane as a helical segment; that stretch reads FYLIAGGIPLIICGITAAVNI. The Extracellular segment spans residues 906-922; it reads HNYRDHSPYCWLVWRPS. The helical transmembrane segment at 923–943 threads the bilayer; it reads LGAFYIPVALILPITWIYFLC. Topologically, residues 944–1016 are cytoplasmic; that stretch reads AGLHLRSHVA…DGVYSPGVQL (73 aa). Residues 1017 to 1037 form a helical membrane-spanning segment; the sequence is GALMTTHFLYLAMWACGALAV. Over 1038-1044 the chain is Extracellular; sequence SQRWLPR. The chain crosses the membrane as a helical span at residues 1045-1065; the sequence is VVCSCLYGVAASALGLFVFTH. Residues 1066 to 1336 lie on the Cytoplasmic side of the membrane; that stretch reads HCARRRDVRA…TGLWKSETTV (271 aa). Low complexity predominate over residues 1084 to 1095; the sequence is ASPSASHVPARA. Residues 1084 to 1310 form a disordered region; it reads ASPSASHVPA…NGAPKGGKYE (227 aa). A Phosphoserine modification is found at Ser-1104. Low complexity predominate over residues 1110–1124; that stretch reads GPASLKSSPSGSSGR. The span at 1133 to 1143 shows a compositional bias: polar residues; the sequence is TNLQVAQSQVC. Basic residues predominate over residues 1166–1186; that stretch reads PRHHNNLHHGRRVHKSRAKGH. Residues 1213 to 1234 show a composition bias toward polar residues; it reads SSESGSLHNSPSDSYPGSSRNS. A PDZ-binding motif is present at residues 1333-1336; the sequence is ETTV.

It belongs to the G-protein coupled receptor 2 family. Adhesion G-protein coupled receptor (ADGR) subfamily. In terms of assembly, interacts with RECK; the interaction is direct. Interacts (via PDZ-binding motif) with DLG1 (via PDZ domains). The cleaved extracellular subunit interacts with the integrin heterodimer ITGAV:ITGB3. Post-translationally, glycosylated. Proteolytically cleaved into two subunits, an extracellular subunit and a seven-transmembrane subunit. Cleaved by thrombin (F2) and MMP1. Also cleaved by MMP9, with lower efficiency. Presence of the protein disulfide-isomerase P4HB at the cell surface is additionally required for shedding of the extracellular subunit, suggesting that the subunits are linked by disulfide bonds. Shedding is enhanced by the growth factor FGF2 and may promote cell survival during angiogenesis. As to expression, abundantly expressed in the vasculature of the developing embryo. Expression in normal adult tissues is specifically vascular with endothelial expression in CNS, including brain and retina and more widespread pericyte expression in the brain and organs, including the kidney, pancreas and corpus luteum.

Its subcellular location is the cell membrane. It localises to the cell projection. The protein localises to the filopodium. Functionally, endothelial receptor which functions together with RECK to enable brain endothelial cells to selectively respond to Wnt7 signals (WNT7A or WNT7B). Plays a key role in Wnt7-specific responses, such as endothelial cell sprouting and migration in the forebrain and neural tube, and establishment of the blood-brain barrier. Acts as a Wnt7-specific coactivator of canonical Wnt signaling: required to deliver RECK-bound Wnt7 to frizzled by assembling a higher-order RECK-ADGRA2-Fzd-LRP5-LRP6 complex. ADGRA2-tethering function does not rely on its G-protein coupled receptor (GPCR) structure but instead on its combined capacity to interact with RECK extracellularly and recruit the Dishevelled scaffolding protein intracellularly. Binds to the glycosaminoglycans heparin, heparin sulfate, chondroitin sulfate and dermatan sulfate. The protein is Adhesion G protein-coupled receptor A2 of Mus musculus (Mouse).